We begin with the raw amino-acid sequence, 461 residues long: Acetylcholine receptor subunit alpha (461 aa).

An N-terminal signal peptide occupies residues 1–24 (MILCSYWHVGLVLLLFSCCGLVLG). Over 25 to 234 (SEHETRLVAN…ITYHFIMQRI (210 aa)) the chain is Extracellular. Cystine bridges form between C152/C166 and C216/C217. Residue N165 is glycosylated (N-linked (GlcNAc...) asparagine). 3 helical membrane-spanning segments follow: residues 235 to 259 (PLYF…VFYL), 267 to 285 (MTLS…LVIV), and 301 to 320 (YMLF…VVVI). Topologically, residues 321-432 (NTHHRSPSTH…WKYVAMVIDH (112 aa)) are cytoplasmic. Residues 433–451 (ILLCVFMLICIIGTVSVFA) traverse the membrane as a helical segment.

It belongs to the ligand-gated ion channel (TC 1.A.9) family. Acetylcholine receptor (TC 1.A.9.1) subfamily. Alpha-1/CHRNA1 sub-subfamily. As to quaternary structure, pentamer of two alpha chains, and one each of the beta, delta, and gamma chains.

The protein localises to the postsynaptic cell membrane. Its subcellular location is the cell membrane. The catalysed reaction is K(+)(in) = K(+)(out). It catalyses the reaction Na(+)(in) = Na(+)(out). Functionally, upon acetylcholine binding, the AChR responds by an extensive change in conformation that affects all subunits and leads to opening of an ion-conducting channel across the plasma membrane. The chain is Acetylcholine receptor subunit alpha (CHRNA1) from Torpedo marmorata (Marbled electric ray).